The sequence spans 421 residues: Nuclear envelope integral membrane protein 2 (421 aa).

The signal sequence occupies residues 1-22; it reads MPPGSWWLVLWLPPLATLPAGA. The next 5 helical transmembrane spans lie at 147-167, 175-195, 206-226, 232-252, and 279-299; these read NVVD…FFYA, VFYY…FVLL, TFGA…CQLM, LWCG…LCSF, and LVLV…MILL.

Belongs to the NEMP family.

The protein localises to the nucleus inner membrane. This Rattus norvegicus (Rat) protein is Nuclear envelope integral membrane protein 2 (Nemp2).